A 699-amino-acid polypeptide reads, in one-letter code: Transketolase (699 aa).

His45 lines the substrate pocket. Residues Thr48, His85, and 133 to 135 (GPL) contribute to the thiamine diphosphate site. Asp177 provides a ligand contact to Mg(2+). Residues Gly178 and Asn207 each contribute to the thiamine diphosphate site. Mg(2+) contacts are provided by Asn207 and Ile209. The substrate site is built by His283, Arg378, and Ser405. His283 lines the thiamine diphosphate pocket. Glu441 acts as the Proton donor in catalysis. A thiamine diphosphate-binding site is contributed by Phe467. Residues His491, Asp499, and Arg552 each coordinate substrate.

The protein belongs to the transketolase family. As to quaternary structure, homodimer. Mg(2+) is required as a cofactor. It depends on Ca(2+) as a cofactor. Mn(2+) serves as cofactor. The cofactor is Co(2+). Requires thiamine diphosphate as cofactor.

It catalyses the reaction D-sedoheptulose 7-phosphate + D-glyceraldehyde 3-phosphate = aldehydo-D-ribose 5-phosphate + D-xylulose 5-phosphate. Functionally, catalyzes the transfer of a two-carbon ketol group from a ketose donor to an aldose acceptor, via a covalent intermediate with the cofactor thiamine pyrophosphate. The protein is Transketolase (tkt) of Mycobacterium leprae (strain TN).